A 329-amino-acid polypeptide reads, in one-letter code: Carbonic anhydrase (329 aa).

Positions 1-108 (MSTASAFAIN…AAARIDQITA (108 aa)) are chloroplast transit peptide-like.

The protein belongs to the beta-class carbonic anhydrase family. Homohexamer.

It localises to the cytoplasm. The enzyme catalyses hydrogencarbonate + H(+) = CO2 + H2O. Reversible hydration of carbon dioxide. This Flaveria pringlei protein is Carbonic anhydrase.